Here is a 428-residue protein sequence, read N- to C-terminus: Stromal membrane-associated protein 2 (428 aa).

One can recognise an Arf-GAP domain in the interval 13 to 139; sequence QAVLGSLLSE…INTFRKEKDD (127 aa). Residues 28–51 form a C4-type zinc finger; it reads CADCQAKGPRWASWNIGVFICIRC. Residues 161–172 are compositionally biased toward basic and acidic residues; sequence VKMPQKKEETQQ. 2 disordered regions span residues 161-182 and 222-258; these read VKMPQKKEETQQSRKSSPKSTE and SRKVSGSMPTSGSAGSVPENLNLFPEPGGKGEEAGKK.

As to quaternary structure, may interact with clathrin heavy chains.

Functionally, GTPase activating protein. May play a role in clathrin-dependent retrograde transport from early endosomes to the trans-Golgi network. This Gallus gallus (Chicken) protein is Stromal membrane-associated protein 2 (SMAP2).